Consider the following 540-residue polypeptide: Chaperonin GroEL 4 (540 aa).

Residues 29–32 (TLGP), 86–90 (DGTTT), G413, 477–479 (NAA), and D493 each bind ATP.

Belongs to the chaperonin (HSP60) family. In terms of assembly, forms a cylinder of 14 subunits composed of two heptameric rings stacked back-to-back. Interacts with the co-chaperonin GroES.

The protein localises to the cytoplasm. The catalysed reaction is ATP + H2O + a folded polypeptide = ADP + phosphate + an unfolded polypeptide.. Its function is as follows. Together with its co-chaperonin GroES, plays an essential role in assisting protein folding. The GroEL-GroES system forms a nano-cage that allows encapsulation of the non-native substrate proteins and provides a physical environment optimized to promote and accelerate protein folding. This Frankia casuarinae (strain DSM 45818 / CECT 9043 / HFP020203 / CcI3) protein is Chaperonin GroEL 4.